The following is a 575-amino-acid chain: uncharacterized protein (575 aa).

The 120-residue stretch at 1–120 folds into the HTH marR-type domain; it reads MKLIEHYVAL…YNMWLSEVFG (120 aa). Positions 26–49 form a DNA-binding region, H-T-H motif; that stretch reads LTEIADCLFCTERNAKLILHKLEN. A solute-binding region region spans residues 176–490; sequence EPKPHLVHGW…FGFLHLLLSE (315 aa).

In the C-terminal section; belongs to the bacterial solute-binding protein 5 family.

This is an uncharacterized protein from Bacillus subtilis (strain 168).